Consider the following 807-residue polypeptide: Nucleolar complex protein 3 homolog (807 aa).

Disordered regions lie at residues Lys27 to Asp93 and Glu167 to Glu191. The span at Lys40–Gln51 shows a compositional bias: basic residues. Positions Ala52–Arg78 are enriched in basic and acidic residues. 2 stretches are compositionally biased toward acidic residues: residues Glu79 to Asp93 and Gln174 to Ile190. A Glycyl lysine isopeptide (Lys-Gly) (interchain with G-Cter in SUMO2) cross-link involves residue Lys332. Residues Phe449–Leu489 adopt a coiled-coil conformation.

It belongs to the CBF/MAK21 family.

The protein localises to the nucleus. It localises to the nucleolus. The protein resides in the nucleus speckle. Its function is as follows. May be required for adipogenesis. This chain is Nucleolar complex protein 3 homolog (Noc3l), found in Mus musculus (Mouse).